Consider the following 338-residue polypeptide: Ketol-acid reductoisomerase (NADP(+)) (338 aa).

Positions 1–181 constitute a KARI N-terminal Rossmann domain; sequence MKVFYDKDAD…GGGRAGIIET (181 aa). Residues 24-27, Arg-47, and Ser-52 contribute to the NADP(+) site; that span reads YGSQ. The active site involves His-107. Gly-133 is a binding site for NADP(+). In terms of domain architecture, KARI C-terminal knotted spans 182-327; sequence NFREETETDL…EKLRAMMPWI (146 aa). 4 residues coordinate Mg(2+): Asp-190, Glu-194, Glu-226, and Glu-230. Ser-251 lines the substrate pocket.

Belongs to the ketol-acid reductoisomerase family. It depends on Mg(2+) as a cofactor.

It carries out the reaction (2R)-2,3-dihydroxy-3-methylbutanoate + NADP(+) = (2S)-2-acetolactate + NADPH + H(+). The enzyme catalyses (2R,3R)-2,3-dihydroxy-3-methylpentanoate + NADP(+) = (S)-2-ethyl-2-hydroxy-3-oxobutanoate + NADPH + H(+). Its pathway is amino-acid biosynthesis; L-isoleucine biosynthesis; L-isoleucine from 2-oxobutanoate: step 2/4. The protein operates within amino-acid biosynthesis; L-valine biosynthesis; L-valine from pyruvate: step 2/4. Its function is as follows. Involved in the biosynthesis of branched-chain amino acids (BCAA). Catalyzes an alkyl-migration followed by a ketol-acid reduction of (S)-2-acetolactate (S2AL) to yield (R)-2,3-dihydroxy-isovalerate. In the isomerase reaction, S2AL is rearranged via a Mg-dependent methyl migration to produce 3-hydroxy-3-methyl-2-ketobutyrate (HMKB). In the reductase reaction, this 2-ketoacid undergoes a metal-dependent reduction by NADPH to yield (R)-2,3-dihydroxy-isovalerate. In Cupriavidus taiwanensis (strain DSM 17343 / BCRC 17206 / CCUG 44338 / CIP 107171 / LMG 19424 / R1) (Ralstonia taiwanensis (strain LMG 19424)), this protein is Ketol-acid reductoisomerase (NADP(+)).